Here is a 201-residue protein sequence, read N- to C-terminus: Recombination protein RecR (201 aa).

The segment at 60–75 (CRRCGNVDVCDPCTIC) adopts a C4-type zinc-finger fold. One can recognise a Toprim domain in the interval 83–178 (RTLVVVADVG…RVTRLAQGVP (96 aa)).

It belongs to the RecR family.

Its function is as follows. May play a role in DNA repair. It seems to be involved in an RecBC-independent recombinational process of DNA repair. It may act with RecF and RecO. This Xanthobacter autotrophicus (strain ATCC BAA-1158 / Py2) protein is Recombination protein RecR.